The sequence spans 121 residues: SLFELGKMILQETGKNSVKSYGVYGCNCGVGGRGKPKDATDRCCYVHKCCYKKLTGCDPKKDRYSYSWKDKTIVCGENNPCLKELCECDKAVAICLRENLGTYNKKYRYHLKPFCKKADPC.

7 cysteine pairs are disulfide-bonded: cysteine 26–cysteine 115, cysteine 28–cysteine 44, cysteine 43–cysteine 95, cysteine 49–cysteine 121, cysteine 50–cysteine 88, cysteine 57–cysteine 81, and cysteine 75–cysteine 86. The tract at residues 105–117 (KKYRYHLKPFCKK) is important for membrane-damaging activities in eukaryotes and bacteria; heparin-binding.

The protein belongs to the phospholipase A2 family. Group II subfamily. K49 sub-subfamily. In terms of assembly, homodimer; non-covalently linked. In terms of tissue distribution, expressed by the venom gland.

The protein localises to the secreted. In terms of biological role, snake venom phospholipase A2 (PLA2) homolog that lacks enzymatic activity. Shows myotoxic and edema-inducing activities in vivo. A model of myotoxic mechanism has been proposed: an apo Lys49-PLA2 is activated by the entrance of a hydrophobic molecule (e.g. fatty acid) at the hydrophobic channel of the protein leading to a reorientation of a monomer. This reorientation causes a transition between 'inactive' to 'active' states, causing alignment of C-terminal and membrane-docking sites (MDoS) side-by-side and putting the membrane-disruption sites (MDiS) in the same plane, exposed to solvent and in a symmetric position for both monomers. The MDoS region stabilizes the toxin on membrane by the interaction of charged residues with phospholipid head groups. Subsequently, the MDiS region destabilizes the membrane with penetration of hydrophobic residues. This insertion causes a disorganization of the membrane, allowing an uncontrolled influx of ions (i.e. calcium and sodium), and eventually triggering irreversible intracellular alterations and cell death. This is Basic phospholipase A2 homolog blK-PLA2 from Bothrops leucurus (Whitetail lancehead).